Here is a 184-residue protein sequence, read N- to C-terminus: Photosystem I assembly protein Ycf4 (184 aa).

2 helical membrane passes run 22 to 42 (FCWAFILFLGSLGFLLVGTSS) and 57 to 77 (IIFFPQGIVMSFYGIAGLFIS).

Belongs to the Ycf4 family.

The protein localises to the plastid. Its subcellular location is the chloroplast thylakoid membrane. Seems to be required for the assembly of the photosystem I complex. This chain is Photosystem I assembly protein Ycf4, found in Capsella bursa-pastoris (Shepherd's purse).